The chain runs to 346 residues: Cyclin-dependent kinase 2 (346 aa).

The residue at position 1 (methionine 1) is an N-acetylmethionine. The 331-residue stretch at 4–334 folds into the Protein kinase domain; sequence FQKVEKIGEG…AKAALAHPFF (331 aa). N6-acetyllysine is present on lysine 6. ATP is bound at residue 10-18; it reads IGEGTYGVV. At threonine 14 the chain carries Phosphothreonine. Tyrosine 15 carries the post-translational modification Phosphotyrosine; by WEE1. Tyrosine 19 is subject to Phosphotyrosine. ATP is bound by residues lysine 33, 81 to 83, and aspartate 86; that span reads EFL. Catalysis depends on aspartate 127, which acts as the Proton acceptor. Residues 129–132 and aspartate 145 contribute to the ATP site; that span reads KPQN. Positions 132 and 145 each coordinate Mg(2+). A Phosphothreonine; by CAK and CCRK modification is found at threonine 160. At serine 218 the chain carries Phosphoserine.

It belongs to the protein kinase superfamily. CMGC Ser/Thr protein kinase family. CDC2/CDKX subfamily. In terms of assembly, found in a complex with CABLES1, CCNA1 and CCNE1. Interacts with CABLES1. Interacts with UHRF2. Part of a complex consisting of UHRF2, CDK2 and CCNE1. Interacts with the Speedy/Ringo proteins SPDYA and SPDYC. Interaction with SPDYA promotes kinase activation via a conformation change that alleviates obstruction of the substrate-binding cleft by the T-loop. Found in a complex with both SPDYA and CDKN1B/KIP1. Binds to RB1 and CDK7. Binding to CDKN1A (p21) leads to CDK2/cyclin E inactivation at the G1-S phase DNA damage checkpoint, thereby arresting cells at the G1-S transition during DNA repair. Associated with PTPN6 and beta-catenin/CTNNB1. Interacts with CACUL1. May interact with CEP63. Interacts with ANKRD17. Interacts with CEBPA (when phosphorylated). Forms a ternary complex with CCNA2 and CDKN1B; CDKN1B inhibits the kinase activity of CDK2 through conformational rearrangements. Interacts with cyclins A, B1, B3, D, or E. Interacts with CDK2AP2. Mg(2+) is required as a cofactor. In terms of processing, phosphorylated at Thr-160 by CDK7 in a CAK complex. Phosphorylation at Thr-160 promotes kinase activity, whereas phosphorylation at Tyr-15 by WEE1 reduces slightly kinase activity. Phosphorylated on Thr-14 and Tyr-15 during S and G2 phases before being dephosphorylated by CDC25A. Nitrosylated after treatment with nitric oxide (DETA-NO).

It is found in the cytoplasm. The protein resides in the cytoskeleton. The protein localises to the microtubule organizing center. It localises to the centrosome. Its subcellular location is the nucleus. It is found in the cajal body. The protein resides in the endosome. The enzyme catalyses L-seryl-[protein] + ATP = O-phospho-L-seryl-[protein] + ADP + H(+). The catalysed reaction is L-threonyl-[protein] + ATP = O-phospho-L-threonyl-[protein] + ADP + H(+). Phosphorylation at Thr-14 or Tyr-15 inactivates the enzyme, while phosphorylation at Thr-160 activates it. Stimulated by MYC. Inactivated by CDKN1A (p21). Functionally, serine/threonine-protein kinase involved in the control of the cell cycle; essential for meiosis, but dispensable for mitosis. Phosphorylates CABLES1, CTNNB1, CDK2AP2, ERCC6, NBN, USP37, p53/TP53, NPM1, CDK7, RB1, BRCA2, MYC, NPAT, EZH2. Triggers duplication of centrosomes and DNA. Acts at the G1-S transition to promote the E2F transcriptional program and the initiation of DNA synthesis, and modulates G2 progression; controls the timing of entry into mitosis/meiosis by controlling the subsequent activation of cyclin B/CDK1 by phosphorylation, and coordinates the activation of cyclin B/CDK1 at the centrosome and in the nucleus. Crucial role in orchestrating a fine balance between cellular proliferation, cell death, and DNA repair in embryonic stem cells (ESCs). Activity of CDK2 is maximal during S phase and G2; activated by interaction with cyclin E during the early stages of DNA synthesis to permit G1-S transition, and subsequently activated by cyclin A2 (cyclin A1 in germ cells) during the late stages of DNA replication to drive the transition from S phase to mitosis, the G2 phase. EZH2 phosphorylation promotes H3K27me3 maintenance and epigenetic gene silencing. Cyclin E/CDK2 prevents oxidative stress-mediated Ras-induced senescence by phosphorylating MYC. Involved in G1-S phase DNA damage checkpoint that prevents cells with damaged DNA from initiating mitosis; regulates homologous recombination-dependent repair by phosphorylating BRCA2, this phosphorylation is low in S phase when recombination is active, but increases as cells progress towards mitosis. In response to DNA damage, double-strand break repair by homologous recombination a reduction of CDK2-mediated BRCA2 phosphorylation. Involved in regulation of telomere repair by mediating phosphorylation of NBN. Phosphorylation of RB1 disturbs its interaction with E2F1. NPM1 phosphorylation by cyclin E/CDK2 promotes its dissociation from unduplicated centrosomes, thus initiating centrosome duplication. Cyclin E/CDK2-mediated phosphorylation of NPAT at G1-S transition and until prophase stimulates the NPAT-mediated activation of histone gene transcription during S phase. Required for vitamin D-mediated growth inhibition by being itself inactivated. Involved in the nitric oxide- (NO) mediated signaling in a nitrosylation/activation-dependent manner. USP37 is activated by phosphorylation and thus triggers G1-S transition. CTNNB1 phosphorylation regulates insulin internalization. Phosphorylates FOXP3 and negatively regulates its transcriptional activity and protein stability. Phosphorylates ERCC6 which is essential for its chromatin remodeling activity at DNA double-strand breaks. Acts as a regulator of the phosphatidylinositol 3-kinase/protein kinase B signal transduction by mediating phosphorylation of the C-terminus of protein kinase B (PKB/AKT1 and PKB/AKT2), promoting its activation. The protein is Cyclin-dependent kinase 2 (Cdk2) of Mus musculus (Mouse).